Reading from the N-terminus, the 260-residue chain is Tetraspanin-14 (260 aa).

Topologically, residues 1 to 10 (MKSQSHKPWN) are cytoplasmic. Residues 11 to 31 (LVAGIFFPIITFFLSAPLVGH) traverse the membrane as a helical segment. Over 32 to 54 (ALYLFCMRNDHVYYRDFQSTLPR) the chain is Extracellular. Residues 55–75 (VQTLVSVSLLALFLLSNIGMF) traverse the membrane as a helical segment. The Cytoplasmic portion of the chain corresponds to 76-80 (LRPRR). Residues 81–101 (LSYFLVIVFFIGFAYSGVYKM) traverse the membrane as a helical segment. Residues 102–260 (ESRRFSPTPM…FLSSLTSLFR (159 aa)) lie on the Extracellular side of the membrane. A glycan (N-linked (GlcNAc...) asparagine) is linked at N182.

It belongs to the tetraspanin (TM4SF) family.

It is found in the membrane. Its function is as follows. May be involved in the regulation of cell differentiation. The protein is Tetraspanin-14 (TET14) of Arabidopsis thaliana (Mouse-ear cress).